The following is a 481-amino-acid chain: UDP-glucose 6-dehydrogenase (481 aa).

NAD(+) contacts are provided by residues 16 to 21 (GAGYVG), Asp41, Lys46, 94 to 98 (VNTPT), 135 to 136 (ST), and Glu172. Substrate is bound by residues 168-172 (EFLAE), 227-231 (KLVAN), Arg267, and 274-280 (QASVGFG). Cys283 functions as the Nucleophile in the catalytic mechanism. An NAD(+)-binding site is contributed by 283-286 (CFQK). A substrate-binding site is contributed by 345–346 (FK). Arg353 serves as a coordination point for NAD(+). Arg447 serves as a coordination point for substrate.

Belongs to the UDP-glucose/GDP-mannose dehydrogenase family. As to expression, expressed in the vulva and in oocytes.

It catalyses the reaction UDP-alpha-D-glucose + 2 NAD(+) + H2O = UDP-alpha-D-glucuronate + 2 NADH + 3 H(+). The protein operates within nucleotide-sugar biosynthesis; UDP-alpha-D-glucuronate biosynthesis; UDP-alpha-D-glucuronate from UDP-alpha-D-glucose: step 1/1. Involved in the biosynthesis of glycosaminoglycans; hyaluronan, chondroitin sulfate, and heparan sulfate. The protein is UDP-glucose 6-dehydrogenase (sqv-4) of Caenorhabditis elegans.